We begin with the raw amino-acid sequence, 160 residues long: SsrA-binding protein (160 aa).

The segment covering 137–153 (DKRDDIKTREWKQDKAR) has biased composition (basic and acidic residues). The tract at residues 137–160 (DKRDDIKTREWKQDKARIMKNANR) is disordered.

Belongs to the SmpB family.

The protein localises to the cytoplasm. Required for rescue of stalled ribosomes mediated by trans-translation. Binds to transfer-messenger RNA (tmRNA), required for stable association of tmRNA with ribosomes. tmRNA and SmpB together mimic tRNA shape, replacing the anticodon stem-loop with SmpB. tmRNA is encoded by the ssrA gene; the 2 termini fold to resemble tRNA(Ala) and it encodes a 'tag peptide', a short internal open reading frame. During trans-translation Ala-aminoacylated tmRNA acts like a tRNA, entering the A-site of stalled ribosomes, displacing the stalled mRNA. The ribosome then switches to translate the ORF on the tmRNA; the nascent peptide is terminated with the 'tag peptide' encoded by the tmRNA and targeted for degradation. The ribosome is freed to recommence translation, which seems to be the essential function of trans-translation. The sequence is that of SsrA-binding protein from Edwardsiella ictaluri (strain 93-146).